The following is a 230-amino-acid chain: Ribonuclease 3 (230 aa).

Residues 5 to 134 (EALLENSFNI…FLGALLLDKG (130 aa)) enclose the RNase III domain. Position 47 (Glu47) interacts with Mg(2+). Residue Asp51 is part of the active site. Positions 120 and 123 each coordinate Mg(2+). The active site involves Glu123. Residues 160 to 229 (DYKTCLQELL…AKNALAQLSE (70 aa)) enclose the DRBM domain.

The protein belongs to the ribonuclease III family. Homodimer. The cofactor is Mg(2+).

It localises to the cytoplasm. It carries out the reaction Endonucleolytic cleavage to 5'-phosphomonoester.. Its function is as follows. Digests double-stranded RNA. Involved in the processing of primary rRNA transcript to yield the immediate precursors to the large and small rRNAs (23S and 16S). Processes some mRNAs, and tRNAs when they are encoded in the rRNA operon. Processes pre-crRNA and tracrRNA of type II CRISPR loci if present in the organism. In Streptococcus equi subsp. zooepidemicus (strain H70), this protein is Ribonuclease 3.